A 226-amino-acid chain; its full sequence is Ribonuclease 3 (226 aa).

An RNase III domain is found at 5–127 (TFQRGDPIGH…IVAAIYLDCG (123 aa)). E40 lines the Mg(2+) pocket. D44 is a catalytic residue. Residues D113 and E116 each coordinate Mg(2+). The active site involves E116. In terms of domain architecture, DRBM spans 154-224 (DPKTRLQEWL…ATLVIAQLDS (71 aa)).

It belongs to the ribonuclease III family. In terms of assembly, homodimer. The cofactor is Mg(2+).

The protein localises to the cytoplasm. The enzyme catalyses Endonucleolytic cleavage to 5'-phosphomonoester.. Digests double-stranded RNA. Involved in the processing of primary rRNA transcript to yield the immediate precursors to the large and small rRNAs (23S and 16S). Processes some mRNAs, and tRNAs when they are encoded in the rRNA operon. Processes pre-crRNA and tracrRNA of type II CRISPR loci if present in the organism. This chain is Ribonuclease 3, found in Xanthomonas axonopodis pv. citri (strain 306).